The primary structure comprises 688 residues: DNA ligase (688 aa).

Residues D42–D46, S91–L92, and E128 each bind NAD(+). Catalysis depends on K130, which acts as the N6-AMP-lysine intermediate. R151, E188, K305, and K329 together coordinate NAD(+). Zn(2+) contacts are provided by C423, C426, C441, and C447. Positions A608–L688 constitute a BRCT domain.

It belongs to the NAD-dependent DNA ligase family. LigA subfamily. Mg(2+) serves as cofactor. It depends on Mn(2+) as a cofactor.

It catalyses the reaction NAD(+) + (deoxyribonucleotide)n-3'-hydroxyl + 5'-phospho-(deoxyribonucleotide)m = (deoxyribonucleotide)n+m + AMP + beta-nicotinamide D-nucleotide.. DNA ligase that catalyzes the formation of phosphodiester linkages between 5'-phosphoryl and 3'-hydroxyl groups in double-stranded DNA using NAD as a coenzyme and as the energy source for the reaction. It is essential for DNA replication and repair of damaged DNA. The sequence is that of DNA ligase from Paraburkholderia xenovorans (strain LB400).